A 574-amino-acid chain; its full sequence is Enolase 4 (574 aa).

A compositionally biased stretch (basic and acidic residues) spans Glu165–Ala175. The disordered stretch occupies residues Glu165–Val221. Residues Pro179 to Ser189 show a composition bias toward pro residues. Over residues Gly193–Lys203 the composition is skewed to basic residues. Glu287 is a binding site for substrate. Lys467 functions as the Proton acceptor in the catalytic mechanism. Lys518 serves as a coordination point for substrate.

It belongs to the enolase family.

It catalyses the reaction (2R)-2-phosphoglycerate = phosphoenolpyruvate + H2O. Its pathway is carbohydrate degradation; glycolysis; pyruvate from D-glyceraldehyde 3-phosphate: step 4/5. This is Enolase 4 (eno4) from Xenopus tropicalis (Western clawed frog).